A 196-amino-acid chain; its full sequence is Calcineurin B homologous protein 2 (196 aa).

Glycine 2 is lipidated: N-myristoyl glycine. EF-hand domains follow at residues 26-61 (ASLL…AVNP), 71-106 (FPDG…PKKP), 111-146 (SRRN…MVGV), and 152-187 (QLEN…MDVE). Phosphoserine is present on serine 27. Ca(2+) is bound by residues aspartate 124, aspartate 126, aspartate 128, lysine 130, and glutamate 135. The Nuclear export signal motif lies at 137–148 (LQVLRLMVGVQV). Ca(2+) contacts are provided by aspartate 165, aspartate 167, aspartate 169, and glutamate 176.

This sequence belongs to the calcineurin regulatory subunit family. CHP subfamily. As to quaternary structure, interacts with PPP3CA. Interacts with SLC9A1/NHE1; the interaction occurs in a calcium-dependent manner. In terms of tissue distribution, expressed in malignantly transformed cells but not detected in normal tissues.

Its subcellular location is the nucleus. It is found in the cytoplasm. The protein localises to the cell membrane. Its function is as follows. Functions as an integral cofactor in cell pH regulation by controlling plasma membrane-type Na(+)/H(+) exchange activity. Binds to and activates SLC9A1/NHE1 in a serum-independent manner, thus increasing pH and protecting cells from serum deprivation-induced death. Also plays a role in the regulation of cell proliferation and tumor growth by increasing the phosphatase activity of PPP3CA in a calcium-dependent manner. Activator of the calcineurin/NFAT signaling pathway. Involved in the cytoplasmic translocation of the transcription factor NFATC3 to the nucleus. The polypeptide is Calcineurin B homologous protein 2 (CHP2) (Homo sapiens (Human)).